The following is a 563-amino-acid chain: Alpha-keto-acid decarboxylase (563 aa).

Thiamine diphosphate is bound at residue Glu59. The tract at residues 347 to 367 (SSPPVASPPAEPLPPPPPREQ) is disordered. Residues 351–366 (VASPPAEPLPPPPPRE) are compositionally biased toward pro residues. The tract at residues 394–476 (TSFYGMADHR…VVVNNDGYTV (83 aa)) is thiamine pyrophosphate binding. Residues Asp444, Asn471, and Gly473 each coordinate Mg(2+).

This sequence belongs to the TPP enzyme family. A metal cation serves as cofactor. Thiamine diphosphate is required as a cofactor.

Its function is as follows. Decarboxylates branched-chain and aromatic alpha-keto acids to aldehydes. The sequence is that of Alpha-keto-acid decarboxylase (kdc) from Mycolicibacterium paratuberculosis (strain ATCC BAA-968 / K-10) (Mycobacterium paratuberculosis).